The sequence spans 530 residues: Phosphoenolpyruvate carboxykinase (ATP) (530 aa).

Residues arginine 60, tyrosine 195, and lysine 201 each contribute to the substrate site. ATP-binding positions include lysine 201, histidine 221, and glycine 237–threonine 245. 2 residues coordinate Mn(2+): lysine 201 and histidine 221. Position 258 (aspartate 258) interacts with Mn(2+). Positions 286, 324, and 449 each coordinate ATP. Arginine 324 is a binding site for substrate.

It belongs to the phosphoenolpyruvate carboxykinase (ATP) family. The cofactor is Mn(2+).

The protein resides in the cytoplasm. It carries out the reaction oxaloacetate + ATP = phosphoenolpyruvate + ADP + CO2. It participates in carbohydrate biosynthesis; gluconeogenesis. Involved in the gluconeogenesis. Catalyzes the conversion of oxaloacetate (OAA) to phosphoenolpyruvate (PEP) through direct phosphoryl transfer between the nucleoside triphosphate and OAA. In Geotalea uraniireducens (strain Rf4) (Geobacter uraniireducens), this protein is Phosphoenolpyruvate carboxykinase (ATP).